A 157-amino-acid polypeptide reads, in one-letter code: DNA gyrase inhibitor (157 aa).

The protein belongs to the DNA gyrase inhibitor family. In terms of assembly, interacts with DNA gyrase.

The protein resides in the cytoplasm. Its function is as follows. Inhibits the supercoiling activity of DNA gyrase. Acts by inhibiting DNA gyrase at an early step, prior to (or at the step of) binding of DNA by the gyrase. It protects cells against toxins that target DNA gyrase, by inhibiting activity of these toxins and reducing the formation of lethal double-strand breaks in the cell. This chain is DNA gyrase inhibitor, found in Citrobacter rodentium (strain ICC168) (Citrobacter freundii biotype 4280).